The primary structure comprises 463 residues: T-box transcription factor TBX1-A (463 aa).

2 disordered regions span residues 39 to 58 (SPSPGDPYSQHEPHYEPCSA) and 75 to 104 (GASSSSCASSTPGSGSTGSSSSNKAPVKKN). The segment covering 75–96 (GASSSSCASSTPGSGSTGSSSS) has biased composition (low complexity). Residues 119 to 297 (LWDEFNQLGT…SNPFAKGFRD (179 aa)) constitute a DNA-binding region (T-box). 2 disordered regions span residues 320–354 (RSRNPVSSPTQNGSDKDGDGRREYERDASGTPLHG) and 377–409 (VPLSTGRPSPPHELRLDPHSQGSEPLHHHPYKY). The span at 323–332 (NPVSSPTQNG) shows a compositional bias: polar residues. A compositionally biased stretch (basic and acidic residues) spans 333–347 (SDKDGDGRREYERDA). A Nuclear localization signal motif is present at residues 420-431 (KTRPAPYPLPTI).

Binds DNA as a dimer. Interacts with dscr6/ripply3.

It is found in the nucleus. Probable transcriptional regulator involved in developmental processes. Binds to the palindromic T site 5'-TTCACACCTAGGTGTGAA-3' DNA sequence. Induces pre-placodal ectoderm (PPE) gene expression in regions where RIPPLY3 is absent. Plays a role in the formation of the anteroposterior (AP) axis during embryonic development; required to establish the posterolateral border of the pre-placodal ectoderm (PPE) acting downstream of the retinoic acid receptor (RAR) signaling. The polypeptide is T-box transcription factor TBX1-A (tbx1-a) (Xenopus laevis (African clawed frog)).